The chain runs to 299 residues: Probable GTP 3',8-cyclase (299 aa).

Residues 4-229 form the Radical SAM core domain; the sequence is LHNREIKSLR…MQNRKKYLVD (226 aa). Residue Arg13 participates in GTP binding. The [4Fe-4S] cluster site is built by Cys20 and Cys24. Tyr26 contributes to the S-adenosyl-L-methionine binding site. A [4Fe-4S] cluster-binding site is contributed by Cys27. Lys61 provides a ligand contact to GTP. Gly65 contacts S-adenosyl-L-methionine. Residue Thr94 participates in GTP binding. Ser118 contacts S-adenosyl-L-methionine. Lys154 is a GTP binding site. Cys245 and Cys248 together coordinate [4Fe-4S] cluster. GTP is bound at residue 250-252; sequence RIR. Cys262 contacts [4Fe-4S] cluster.

The protein belongs to the radical SAM superfamily. MoaA family. [4Fe-4S] cluster serves as cofactor.

The catalysed reaction is GTP + AH2 + S-adenosyl-L-methionine = (8S)-3',8-cyclo-7,8-dihydroguanosine 5'-triphosphate + 5'-deoxyadenosine + L-methionine + A + H(+). Its pathway is cofactor biosynthesis; molybdopterin biosynthesis. Functionally, catalyzes the cyclization of GTP to (8S)-3',8-cyclo-7,8-dihydroguanosine 5'-triphosphate. The chain is Probable GTP 3',8-cyclase from Methanococcus aeolicus (strain ATCC BAA-1280 / DSM 17508 / OCM 812 / Nankai-3).